A 485-amino-acid polypeptide reads, in one-letter code: Anthranilate synthase component I-like protein (485 aa).

Residues S69 and 271–273 (PFA) each bind L-tryptophan. 306 to 307 (GT) serves as a coordination point for chorismate. Residue E333 coordinates Mg(2+). Residues R441, 455 to 457 (GAG), and G457 each bind chorismate. E470 lines the Mg(2+) pocket.

This sequence belongs to the anthranilate synthase component I family. Tetramer of two components I and two components II. It depends on Mg(2+) as a cofactor.

The enzyme catalyses chorismate + L-glutamine = anthranilate + pyruvate + L-glutamate + H(+). It functions in the pathway amino-acid biosynthesis; L-tryptophan biosynthesis; L-tryptophan from chorismate: step 1/5. In Synechocystis sp. (strain ATCC 27184 / PCC 6803 / Kazusa), this protein is Anthranilate synthase component I-like protein (trpE2).